The primary structure comprises 466 residues: Ribulose bisphosphate carboxylase large chain (466 aa).

Residue Lys4 is modified to N6,N6,N6-trimethyllysine. Substrate is bound by residues Asn113 and Thr163. Residue Lys165 is the Proton acceptor of the active site. Residue Lys167 coordinates substrate. The Mg(2+) site is built by Lys191, Asp193, and Glu194. Lys191 is modified (N6-carboxylysine). His284 functions as the Proton acceptor in the catalytic mechanism. Positions 285, 317, and 369 each coordinate substrate.

This sequence belongs to the RuBisCO large chain family. Type I subfamily. In terms of assembly, heterohexadecamer of 8 large chains and 8 small chains; disulfide-linked. The disulfide link is formed within the large subunit homodimers. The cofactor is Mg(2+). In terms of processing, the disulfide bond which can form in the large chain dimeric partners within the hexadecamer appears to be associated with oxidative stress and protein turnover.

It localises to the plastid. The protein localises to the chloroplast. The catalysed reaction is 2 (2R)-3-phosphoglycerate + 2 H(+) = D-ribulose 1,5-bisphosphate + CO2 + H2O. The enzyme catalyses D-ribulose 1,5-bisphosphate + O2 = 2-phosphoglycolate + (2R)-3-phosphoglycerate + 2 H(+). Its function is as follows. RuBisCO catalyzes two reactions: the carboxylation of D-ribulose 1,5-bisphosphate, the primary event in carbon dioxide fixation, as well as the oxidative fragmentation of the pentose substrate in the photorespiration process. Both reactions occur simultaneously and in competition at the same active site. This chain is Ribulose bisphosphate carboxylase large chain, found in Aphelandra sinclairiana (Orange shrimp plant).